Here is a 312-residue protein sequence, read N- to C-terminus: Apolipoprotein E (312 aa).

An N-terminal signal peptide occupies residues Met1–Ala18. 8 repeat units span residues Val72–Gly93, Pro94–Gly115, Ala116–Gly137, Gln138–Met159, Arg160–Glu181, Arg182–Ala203, Asn204–Arg225, and Gly226–Glu247. Residues Val72–Glu247 are 8 X 22 AA approximate tandem repeats. Methionine sulfoxide is present on Met135. The residue at position 139 (Ser139) is a Phosphoserine. The LDL and other lipoprotein receptors binding stretch occupies residues His150 to Arg160. Met154–Arg157 is a heparin binding site. A lipid-binding and lipoprotein association region spans residues Thr202–Met282. Gly221–Leu228 lines the heparin pocket. A homooligomerization region spans residues Gln258–Gln312. Residues Arg270 to Met282 form a specificity for association with VLDL region.

It belongs to the apolipoprotein A1/A4/E family. In terms of assembly, homotetramer. May interact with ABCA1; functionally associated with ABCA1 in the biogenesis of HDLs. May interact with APP/A4 amyloid-beta peptide; the interaction is extremely stable in vitro but its physiological significance is unclear. May interact with MAPT. May interact with MAP2. In the cerebrospinal fluid, interacts with secreted SORL1. Interacts with PMEL; this allows the loading of PMEL luminal fragment on ILVs to induce fibril nucleation. In terms of processing, APOE exists as multiple glycosylated and sialylated glycoforms within cells and in plasma. The extent of glycosylation and sialylation are tissue and context specific. Glycated in plasma VLDL. Post-translationally, phosphorylated by FAM20C in the extracellular medium.

Its subcellular location is the secreted. It localises to the extracellular space. The protein resides in the extracellular matrix. The protein localises to the extracellular vesicle. It is found in the endosome. Its subcellular location is the multivesicular body. In terms of biological role, APOE is an apolipoprotein, a protein associating with lipid particles, that mainly functions in lipoprotein-mediated lipid transport between organs via the plasma and interstitial fluids. APOE is a core component of plasma lipoproteins and is involved in their production, conversion and clearance. Apolipoproteins are amphipathic molecules that interact both with lipids of the lipoprotein particle core and the aqueous environment of the plasma. As such, APOE associates with chylomicrons, chylomicron remnants, very low density lipoproteins (VLDL) and intermediate density lipoproteins (IDL) but shows a preferential binding to high-density lipoproteins (HDL). It also binds a wide range of cellular receptors including the LDL receptor/LDLR, the LDL receptor-related proteins LRP1, LRP2 and LRP8 and the very low-density lipoprotein receptor/VLDLR that mediate the cellular uptake of the APOE-containing lipoprotein particles. Finally, APOE also has a heparin-binding activity and binds heparan-sulfate proteoglycans on the surface of cells, a property that supports the capture and the receptor-mediated uptake of APOE-containing lipoproteins by cells. A main function of APOE is to mediate lipoprotein clearance through the uptake of chylomicrons, VLDLs, and HDLs by hepatocytes. APOE is also involved in the biosynthesis by the liver of VLDLs as well as their uptake by peripheral tissues ensuring the delivery of triglycerides and energy storage in muscle, heart and adipose tissues. By participating in the lipoprotein-mediated distribution of lipids among tissues, APOE plays a critical role in plasma and tissues lipid homeostasis. APOE is also involved in two steps of reverse cholesterol transport, the HDLs-mediated transport of cholesterol from peripheral tissues to the liver, and thereby plays an important role in cholesterol homeostasis. First, it is functionally associated with ABCA1 in the biogenesis of HDLs in tissues. Second, it is enriched in circulating HDLs and mediates their uptake by hepatocytes. APOE also plays an important role in lipid transport in the central nervous system, regulating neuron survival and sprouting. The polypeptide is Apolipoprotein E (Apoe) (Mus pahari (Gairdner's shrew-mouse)).